The sequence spans 66 residues: DNA-directed RNA polymerase subunit omega (66 aa).

Belongs to the RNA polymerase subunit omega family. As to quaternary structure, the RNAP catalytic core consists of 2 alpha, 1 beta, 1 beta' and 1 omega subunit. When a sigma factor is associated with the core the holoenzyme is formed, which can initiate transcription.

It carries out the reaction RNA(n) + a ribonucleoside 5'-triphosphate = RNA(n+1) + diphosphate. Promotes RNA polymerase assembly. Latches the N- and C-terminal regions of the beta' subunit thereby facilitating its interaction with the beta and alpha subunits. This Clostridium botulinum (strain Alaska E43 / Type E3) protein is DNA-directed RNA polymerase subunit omega.